A 92-amino-acid chain; its full sequence is Evasin P942 (92 aa).

The N-terminal stretch at 1–26 (MEVKTFAFLQIAVLIALGLHLAPAGS) is a signal peptide. Intrachain disulfides connect Cys-44-Cys-63, Cys-48-Cys-65, and Cys-59-Cys-76. The N-linked (GlcNAc...) asparagine glycan is linked to Asn-47. The N-linked (GlcNAc...) asparagine glycan is linked to Asn-70.

The protein localises to the secreted. Functionally, salivary chemokine-binding protein which binds to host chemokines CXCL1, CXCL2, CXCL3, CXCL4, CXCL5, CXCL6, CXCL10, CXCL11 and CXCL13. The chain is Evasin P942 from Ixodes ricinus (Common tick).